The following is a 430-amino-acid chain: Histidine--tRNA ligase (430 aa).

This sequence belongs to the class-II aminoacyl-tRNA synthetase family. In terms of assembly, homodimer.

Its subcellular location is the cytoplasm. It catalyses the reaction tRNA(His) + L-histidine + ATP = L-histidyl-tRNA(His) + AMP + diphosphate + H(+). In Synechococcus sp. (strain CC9902), this protein is Histidine--tRNA ligase.